Consider the following 264-residue polypeptide: Small ribosomal subunit protein eS1B (264 aa).

Over residues 1–19 (MALGKNKRISKGGKRGKRG) the composition is skewed to basic residues. Positions 1–23 (MALGKNKRISKGGKRGKRGKAQE) are disordered.

It belongs to the eukaryotic ribosomal protein eS1 family. In terms of assembly, component of the small ribosomal subunit. Mature ribosomes consist of a small (40S) and a large (60S) subunit. The 40S subunit contains about 33 different proteins and 1 molecule of RNA (18S). The 60S subunit contains about 49 different proteins and 3 molecules of RNA (25S, 5.8S and 5S).

The protein resides in the cytoplasm. The protein is Small ribosomal subunit protein eS1B of Leishmania infantum.